The sequence spans 256 residues: Thiazole synthase (256 aa).

Residue lysine 96 is the Schiff-base intermediate with DXP of the active site. 1-deoxy-D-xylulose 5-phosphate contacts are provided by residues glycine 157, 183–184 (AG), and 205–206 (NT).

The protein belongs to the ThiG family. As to quaternary structure, homotetramer. Forms heterodimers with either ThiH or ThiS.

It localises to the cytoplasm. The catalysed reaction is [ThiS sulfur-carrier protein]-C-terminal-Gly-aminoethanethioate + 2-iminoacetate + 1-deoxy-D-xylulose 5-phosphate = [ThiS sulfur-carrier protein]-C-terminal Gly-Gly + 2-[(2R,5Z)-2-carboxy-4-methylthiazol-5(2H)-ylidene]ethyl phosphate + 2 H2O + H(+). It participates in cofactor biosynthesis; thiamine diphosphate biosynthesis. Its function is as follows. Catalyzes the rearrangement of 1-deoxy-D-xylulose 5-phosphate (DXP) to produce the thiazole phosphate moiety of thiamine. Sulfur is provided by the thiocarboxylate moiety of the carrier protein ThiS. In vitro, sulfur can be provided by H(2)S. The polypeptide is Thiazole synthase (Bacillus cereus (strain AH187)).